The sequence spans 232 residues: MLRSSIRLLYIRRTSPLLRSLSSSSSSSSSKRFDSAKPLFNSHRIISLPISTTGAKLSRSEHSMAASSEPKSLYDFTVKDAKGNDVDLSIYKGKVLLIVNVASQCGLTNSNYTELAQLYEKYKGHGFEILAFPCNQFGNQEPGTNEEIVQFACTRFKAEYPIFDKVDVNGDKAAPVYKFLKSSKGGLFGDGIKWNFAKFLVDKDGNVVDRFAPTTSPLSIEKDVKKLLGVTA.

Residues 1–54 constitute a mitochondrion transit peptide; it reads MLRSSIRLLYIRRTSPLLRSLSSSSSSSSSKRFDSAKPLFNSHRIISLPISTTG. Cys105 is an active-site residue.

This sequence belongs to the glutathione peroxidase family. In terms of tissue distribution, expressed at a low but detectable level in leaves, stems, and flowers, but at a higher level in siliques and even higher in roots. Predominantly expressed in seeds.

Its subcellular location is the mitochondrion. It carries out the reaction a hydroperoxy polyunsaturated fatty acid + 2 glutathione = a hydroxy polyunsaturated fatty acid + glutathione disulfide + H2O. Functionally, protects cells and enzymes from oxidative damage, by catalyzing the reduction of hydrogen peroxide, lipid peroxides and organic hydroperoxide, by glutathione. In Arabidopsis thaliana (Mouse-ear cress), this protein is Probable phospholipid hydroperoxide glutathione peroxidase 6, mitochondrial (GPX6).